The sequence spans 267 residues: Tryptophan synthase alpha chain (267 aa).

Active-site proton acceptor residues include Glu49 and Asp60.

It belongs to the TrpA family. In terms of assembly, tetramer of two alpha and two beta chains.

It catalyses the reaction (1S,2R)-1-C-(indol-3-yl)glycerol 3-phosphate + L-serine = D-glyceraldehyde 3-phosphate + L-tryptophan + H2O. The protein operates within amino-acid biosynthesis; L-tryptophan biosynthesis; L-tryptophan from chorismate: step 5/5. In terms of biological role, the alpha subunit is responsible for the aldol cleavage of indoleglycerol phosphate to indole and glyceraldehyde 3-phosphate. This chain is Tryptophan synthase alpha chain, found in Pelobacter propionicus (strain DSM 2379 / NBRC 103807 / OttBd1).